Here is a 195-residue protein sequence, read N- to C-terminus: HTH-type transcriptional regulator BetI (195 aa).

Residues 8-68 (PIRRRQLIDA…ATMRDITSQL (61 aa)) enclose the HTH tetR-type domain. Positions 31–50 (TIAQIARRAGVSTGIISHYF) form a DNA-binding region, H-T-H motif.

The protein operates within amine and polyamine biosynthesis; betaine biosynthesis via choline pathway [regulation]. Repressor involved in the biosynthesis of the osmoprotectant glycine betaine. It represses transcription of the choline transporter BetT and the genes of BetAB involved in the synthesis of glycine betaine. This is HTH-type transcriptional regulator BetI from Klebsiella pneumoniae (strain 342).